Here is a 208-residue protein sequence, read N- to C-terminus: Guanylate kinase (208 aa).

A Guanylate kinase-like domain is found at 8–187 (GVCLVISAPS…AISQARSVLT (180 aa)). Residue 15–22 (APSGAGKS) coordinates ATP.

Belongs to the guanylate kinase family.

It localises to the cytoplasm. It carries out the reaction GMP + ATP = GDP + ADP. Functionally, essential for recycling GMP and indirectly, cGMP. This is Guanylate kinase from Gluconobacter oxydans (strain 621H) (Gluconobacter suboxydans).